The sequence spans 416 residues: Protein P47 (416 aa).

Belongs to the TULIP P47 family. In terms of assembly, part of a crude toxin extract that includes BoNTA2/NTNH, P47, OrfX2 and OrfX3; OrfX1 was not detected.

Functionally, part of a botulinum neurotoxin type A2 (BoNT) locus; may be part of a progenitor toxin complex required to protect BoNT during its passage through the host gastrointestinal tract. This is Protein P47 from Clostridium botulinum (strain Kyoto / Type A2).